A 698-amino-acid polypeptide reads, in one-letter code: Sialic acid-binding Ig-like lectin 11 (698 aa).

The first 27 residues, 1–27 (MVPGQAQPQSPEMLLLPLLLPVLGAGS), serve as a signal peptide directing secretion. Residues 28–561 (LNKDPSYSLQ…KLEHGGGLGL (534 aa)) lie on the Extracellular side of the membrane. The Ig-like V-type domain maps to 31-134 (DPSYSLQVQR…DEAWYFFRVE (104 aa)). 3 disulfides stabilise this stretch: Cys-49–Cys-186, Cys-54–Cys-114, and Cys-177–Cys-228. Residues Asn-55 and Asn-90 are each glycosylated (N-linked (GlcNAc...) asparagine). Arg-132 contributes to the N-acetylneuraminate binding site. 3 consecutive Ig-like C2-type domains span residues 159–244 (PDVY…RTVR), 251–350 (PKDL…LDLS), and 355–452 (PENL…LSLS). N-linked (GlcNAc...) asparagine glycosylation is present at Asn-262. Residues Cys-287 and Cys-334 are joined by a disulfide bond. Residues Asn-366 and Asn-375 are each glycosylated (N-linked (GlcNAc...) asparagine). A disulfide bridge links Cys-391 with Cys-436. N-linked (GlcNAc...) asparagine glycosylation is found at Asn-497 and Asn-515. Residues 562-584 (GAALGAGVAALLAFCSCLVVFRV) form a helical membrane-spanning segment. Residues 585–698 (KICRKEARKR…EREMSGMVPK (114 aa)) are Cytoplasmic-facing. The segment at 596-635 (AAEQDVPSTLGPISQGHQHECSAGSSQDHPPPGAATYTPG) is disordered. The short motif at 642 to 647 (LHYASL) is the ITIM motif element. The residue at position 668 (Tyr-668) is a Phosphotyrosine. Residues 675 to 698 (TGQPLRGPGFGLQLEREMSGMVPK) are disordered.

This sequence belongs to the immunoglobulin superfamily. SIGLEC (sialic acid binding Ig-like lectin) family. In terms of assembly, interacts with PTPN6/SHP-1 and PTPN11/SHP-2 upon phosphorylation. Phosphorylated on tyrosine residues. As to expression, expressed by macrophages in various tissues including Kupffer cells. Also found in brain microglia.

Its subcellular location is the membrane. Functionally, putative adhesion molecule that mediates sialic-acid dependent binding to cells. Preferentially binds to alpha-2,8-linked sialic acid. The sialic acid recognition site may be masked by cis interactions with sialic acids on the same cell surface. In the immune response, may act as an inhibitory receptor upon ligand induced tyrosine phosphorylation by recruiting cytoplasmic phosphatase(s) via their SH2 domain(s) that block signal transduction through dephosphorylation of signaling molecules. The protein is Sialic acid-binding Ig-like lectin 11 (SIGLEC11) of Homo sapiens (Human).